An 81-amino-acid chain; its full sequence is Sulfur carrier protein TusA (81 aa).

The active-site Cysteine persulfide intermediate is the cysteine 19.

Belongs to the sulfur carrier protein TusA family. As to quaternary structure, interacts with IscS.

It localises to the cytoplasm. It participates in tRNA modification. Its function is as follows. Sulfur carrier protein involved in sulfur trafficking in the cell. Part of a sulfur-relay system required for 2-thiolation during synthesis of 2-thiouridine of the modified wobble base 5-methylaminomethyl-2-thiouridine (mnm(5)s(2)U) in tRNA. Interacts with IscS and stimulates its cysteine desulfurase activity. Accepts an activated sulfur from IscS, which is then transferred to TusD, and thus determines the direction of sulfur flow from IscS to 2-thiouridine formation. Also appears to be involved in sulfur transfer for the biosynthesis of molybdopterin. The chain is Sulfur carrier protein TusA from Escherichia coli O17:K52:H18 (strain UMN026 / ExPEC).